A 134-amino-acid chain; its full sequence is Prefoldin subunit alpha (134 aa).

The protein belongs to the prefoldin subunit alpha family. In terms of assembly, heterohexamer of two alpha and four beta subunits.

The protein localises to the cytoplasm. Its function is as follows. Molecular chaperone capable of stabilizing a range of proteins. Seems to fulfill an ATP-independent, HSP70-like function in archaeal de novo protein folding. This Pyrobaculum calidifontis (strain DSM 21063 / JCM 11548 / VA1) protein is Prefoldin subunit alpha.